A 599-amino-acid polypeptide reads, in one-letter code: Aspartate--tRNA(Asp/Asn) ligase (599 aa).

L-aspartate is bound at residue E174. The tract at residues 198 to 201 is aspartate; sequence QLFK. Position 220 (R220) interacts with L-aspartate. Residues 220-222 and Q229 each bind ATP; that span reads RDE. H457 is an L-aspartate binding site. Residue E491 coordinates ATP. R498 provides a ligand contact to L-aspartate. 543–546 lines the ATP pocket; sequence GLDR.

It belongs to the class-II aminoacyl-tRNA synthetase family. Type 1 subfamily. Homodimer.

The protein localises to the cytoplasm. The catalysed reaction is tRNA(Asx) + L-aspartate + ATP = L-aspartyl-tRNA(Asx) + AMP + diphosphate. Its function is as follows. Aspartyl-tRNA synthetase with relaxed tRNA specificity since it is able to aspartylate not only its cognate tRNA(Asp) but also tRNA(Asn). Reaction proceeds in two steps: L-aspartate is first activated by ATP to form Asp-AMP and then transferred to the acceptor end of tRNA(Asp/Asn). In Paraburkholderia xenovorans (strain LB400), this protein is Aspartate--tRNA(Asp/Asn) ligase.